A 68-amino-acid polypeptide reads, in one-letter code: MPKLKTRSSAKKRFDVKKSGKVKHGKAFAKHLFTFSKTPKSKRSNRGTGHLRDMDAKKVIKEMFPYGG.

Basic residues-rich tracts occupy residues 1–11 (MPKLKTRSSAK) and 19–29 (SGKVKHGKAFA). The segment at 1-54 (MPKLKTRSSAKKRFDVKKSGKVKHGKAFAKHLFTFSKTPKSKRSNRGTGHLRDM) is disordered.

Belongs to the bacterial ribosomal protein bL35 family.

The sequence is that of Large ribosomal subunit protein bL35 from Myxococcus xanthus (strain DK1622).